Consider the following 349-residue polypeptide: UDP-glucose 4-epimerase (349 aa).

Residues 10-12 (GFI), 31-35 (DNFAN), 66-67 (DV), and Lys92 each bind NAD(+). Residue 132-134 (SAT) coordinates substrate. Residue Tyr158 is the Proton acceptor of the active site. Residues Lys162 and Tyr186 each coordinate NAD(+). Substrate is bound by residues 186-188 (YFN), 207-209 (NNL), 225-227 (TIY), Arg240, and 303-306 (RPGD).

The protein belongs to the NAD(P)-dependent epimerase/dehydratase family. NAD(+) is required as a cofactor. In terms of tissue distribution, expressed in gonads, vulva, intestine, hypdermis and nervous system.

The enzyme catalyses UDP-alpha-D-glucose = UDP-alpha-D-galactose. It catalyses the reaction UDP-N-acetyl-alpha-D-glucosamine = UDP-N-acetyl-alpha-D-galactosamine. It participates in carbohydrate metabolism; galactose metabolism. Functionally, catalyzes two distinct but analogous reactions: the reversible epimerization of UDP-glucose to UDP-galactose and the reversible epimerization of UDP-N-acetylglucosamine to UDP-N-acetylgalactosamine. The reaction with UDP-Gal plays a critical role in the Leloir pathway of galactose catabolism in which galactose is converted to the glycolytic intermediate glucose 6-phosphate. It contributes to the catabolism of dietary galactose and enables the endogenous biosynthesis of both UDP-Gal and UDP-GalNAc when exogenous sources are limited. Both UDP-sugar interconversions are important for the synthesis of glycoproteins and glycolipids. The protein is UDP-glucose 4-epimerase of Caenorhabditis elegans.